The sequence spans 181 residues: Proteinase inhibitor B (181 aa).

The N-terminal stretch at 1–24 is a signal peptide; it reads MAASNALLLISGALLISLAVLCQG. 3 cysteine pairs are disulfide-bonded: C67/C113, C134/C143, and C136/C139.

Belongs to the protease inhibitor I3 (leguminous Kunitz-type inhibitor) family.

The protein localises to the secreted. In terms of biological role, possesses two reactive sites. Inhibits two molecules of trypsin simultaneously. Inhibits efficiently kallikrein, but chymotrypsin weakly. This chain is Proteinase inhibitor B, found in Sagittaria sagittifolia (Arrowhead).